The primary structure comprises 150 residues: U1 small nuclear ribonucleoprotein C (150 aa).

Residues Y4–D36 form a Matrin-type zinc finger. The interval S66–Y132 is disordered. Positions D80 to K92 are enriched in basic and acidic residues. Residues N103–M112 are compositionally biased toward acidic residues. The segment covering L115–A130 has biased composition (pro residues).

The protein belongs to the U1 small nuclear ribonucleoprotein C family. In terms of assembly, U1 snRNP is composed of the 7 core Sm proteins B/B', D1, D2, D3, E, F and G that assemble in a heptameric protein ring on the Sm site of the small nuclear RNA to form the core snRNP, and at least 3 U1 snRNP-specific proteins U1-70K, U1-A and U1-C. U1-C interacts with U1 snRNA and the 5' splice-site region of the pre-mRNA.

It localises to the nucleus. Its function is as follows. Component of the spliceosomal U1 snRNP, which is essential for recognition of the pre-mRNA 5' splice-site and the subsequent assembly of the spliceosome. U1-C is directly involved in initial 5' splice-site recognition for both constitutive and regulated alternative splicing. The interaction with the 5' splice-site seems to precede base-pairing between the pre-mRNA and the U1 snRNA. Stimulates commitment or early (E) complex formation by stabilizing the base pairing of the 5' end of the U1 snRNA and the 5' splice-site region. This is U1 small nuclear ribonucleoprotein C from Candida albicans (strain SC5314 / ATCC MYA-2876) (Yeast).